Consider the following 631-residue polypeptide: Phosphomethylpyrimidine synthase (631 aa).

Substrate is bound by residues Asn239, Met268, Tyr297, His333, 353-355, 394-397, and Glu433; these read SRG and DGLR. His437 contributes to the Zn(2+) binding site. Residue Tyr460 participates in substrate binding. His501 provides a ligand contact to Zn(2+). Cys581, Cys584, and Cys589 together coordinate [4Fe-4S] cluster.

The protein belongs to the ThiC family. Homodimer. It depends on [4Fe-4S] cluster as a cofactor.

The enzyme catalyses 5-amino-1-(5-phospho-beta-D-ribosyl)imidazole + S-adenosyl-L-methionine = 4-amino-2-methyl-5-(phosphooxymethyl)pyrimidine + CO + 5'-deoxyadenosine + formate + L-methionine + 3 H(+). Its pathway is cofactor biosynthesis; thiamine diphosphate biosynthesis. Catalyzes the synthesis of the hydroxymethylpyrimidine phosphate (HMP-P) moiety of thiamine from aminoimidazole ribotide (AIR) in a radical S-adenosyl-L-methionine (SAM)-dependent reaction. The polypeptide is Phosphomethylpyrimidine synthase (Escherichia coli O81 (strain ED1a)).